Consider the following 112-residue polypeptide: Transmembrane protein 14C (112 aa).

A run of 4 helical transmembrane segments spans residues 7-27 (VVPL…GGII), 32-52 (AGSV…SLGA), 62-82 (VWVF…RFYH), and 86-106 (FMPA…VGVS).

This sequence belongs to the TMEM14 family.

It localises to the mitochondrion membrane. In terms of biological role, required for normal heme biosynthesis. This is Transmembrane protein 14C (TMEM14C) from Pongo abelii (Sumatran orangutan).